The sequence spans 605 residues: Pyruvate decarboxylase 1 (605 aa).

The substrate site is built by Asp67 and His154. Residues 432-514 (DSWFNCQKLR…FLINNGGYTI (83 aa)) form a thiamine pyrophosphate binding region. Mg(2+) contacts are provided by Asp482, Asn509, and Gly511. Residue Glu515 coordinates substrate.

It belongs to the TPP enzyme family. Homotetramer. A metal cation is required as a cofactor. Requires thiamine diphosphate as cofactor.

It catalyses the reaction a 2-oxocarboxylate + H(+) = an aldehyde + CO2. In Oryza sativa subsp. japonica (Rice), this protein is Pyruvate decarboxylase 1 (PDC1).